Consider the following 581-residue polypeptide: Protein LYRIC (581 aa).

Over methionine 1–serine 49 the chain is Lumenal. The activation of NF-kappa-B stretch occupies residues methionine 1–tryptophan 71. Residues tryptophan 50 to glycine 70 form a helical membrane-spanning segment. The Cytoplasmic portion of the chain corresponds to tryptophan 71 to threonine 581. The interaction with BCCIP stretch occupies residues alanine 72 to serine 168. The segment at glycine 77–proline 221 is disordered. Residues glutamate 100–arginine 204 are interaction with RELA. Residues leucine 108–lysine 126 are compositionally biased toward basic and acidic residues. Position 142 is a phosphothreonine (threonine 142). Positions glutamate 159–serine 168 are enriched in basic residues. Serine 179 bears the Phosphoserine mark. The segment covering histidine 197–aspartate 207 has biased composition (basic residues). Residues serine 215 and serine 250 each carry the phosphoserine modification. Lysine 263 is modified (N6-acetyllysine). Positions valine 280–threonine 581 are disordered. Serine 297, serine 305, and serine 310 each carry phosphoserine. Polar residues predominate over residues glutamine 318–asparagine 331. Phosphoserine occurs at positions 343 and 368. 2 stretches are compositionally biased toward polar residues: residues glutamate 353 to glutamine 371 and asparagine 382 to tryptophan 393. The lung-homing for mammary tumors stretch occupies residues glycine 380–lysine 442. A phosphoserine mark is found at serine 414 and serine 425. Residues aspartate 421–glutamate 433 show a composition bias toward basic and acidic residues. The span at lysine 440–lysine 450 shows a compositional bias: basic residues. Phosphoserine occurs at positions 456, 477, 493, and 495. 2 stretches are compositionally biased toward polar residues: residues proline 519–valine 535 and asparagine 548–serine 567. Residue serine 567 is modified to Phosphoserine. Residues glutamine 570–threonine 581 are compositionally biased toward basic residues.

In terms of assembly, interacts with BCCIP, CREBBP/CBP and RELA/p65. Widely expressed, with highest levels in liver, kidney, prostate and small intestine. Not detected in endothelial cells.

It is found in the endoplasmic reticulum membrane. Its subcellular location is the nucleus membrane. The protein localises to the cell junction. It localises to the tight junction. The protein resides in the nucleus. It is found in the nucleolus. Its subcellular location is the cytoplasm. The protein localises to the perinuclear region. Functionally, down-regulates SLC1A2/EAAT2 promoter activity when expressed ectopically. Activates the nuclear factor kappa-B (NF-kappa-B) transcription factor. Promotes anchorage-independent growth of immortalized melanocytes and astrocytes which is a key component in tumor cell expansion. Promotes lung metastasis and also has an effect on bone and brain metastasis, possibly by enhancing the seeding of tumor cells to the target organ endothelium. Induces chemoresistance. The sequence is that of Protein LYRIC (Mtdh) from Rattus norvegicus (Rat).